The primary structure comprises 247 residues: uncharacterized protein (247 aa).

This is an uncharacterized protein from Schizosaccharomyces pombe (strain 972 / ATCC 24843) (Fission yeast).